The chain runs to 327 residues: Probable cytosolic iron-sulfur protein assembly protein CIAO1 homolog (327 aa).

WD repeat units follow at residues 3–42 (GHEDRVWSVAWSPNGFVLASCGGDKTIRIWGKEGDKWICK), 48–87 (GHQRTIRSLGWSPCGTFLASASFDATTCIWDQKSGEFECN), 92–131 (GHENEVKSVDWSVSGSLLATCGRDKSVWIWEVQEDDEYEC), 137–176 (SHTQDVKKVVWHPTKEILASCSYDDTIKLYKEDEDDWSCC), 181–220 (GHESTVWSISFDGSGDRIVSCSDDKTVRIWKSYPPGNQEG), 239–278 (YHDRTIYDVHWSKVSGLIATASGDDCIRIFKEDTNSDRNQ), and 290–327 (AHSMDVNSICWHPKDENILATCSDDGTVKLWRFTPAEE).

The protein belongs to the WD repeat CIA1 family.

Essential component of the cytosolic iron-sulfur (Fe/S) protein assembly machinery. Required for the maturation of extramitochondrial Fe/S proteins. This Nematostella vectensis (Starlet sea anemone) protein is Probable cytosolic iron-sulfur protein assembly protein CIAO1 homolog.